The sequence spans 53 residues: UPF0391 membrane protein BP1737 (53 aa).

A run of 2 helical transmembrane segments spans residues 5–25 and 30–50; these read AVVF…GIAA and IAKI…LGGV.

This sequence belongs to the UPF0391 family.

It is found in the cell membrane. This chain is UPF0391 membrane protein BP1737, found in Bordetella pertussis (strain Tohama I / ATCC BAA-589 / NCTC 13251).